Reading from the N-terminus, the 147-residue chain is uncharacterized protein (147 aa).

Positions 7 to 147 (LEINYKTDEL…GHDVLVWAPK (141 aa)) constitute an N-acetyltransferase domain.

This is an uncharacterized protein from Staphylococcus haemolyticus (strain JCSC1435).